The following is a 307-amino-acid chain: Protein FAM76A (307 aa).

Disordered regions lie at residues Gln142–Thr195 and Lys287–Pro307. Residues Ser161–Asn182 are compositionally biased toward polar residues. The stretch at Ile217–Glu299 forms a coiled coil.

It belongs to the FAM76 family.

This Bos taurus (Bovine) protein is Protein FAM76A (FAM76A).